Here is a 168-residue protein sequence, read N- to C-terminus: Phosphopantetheine adenylyltransferase (168 aa).

Residue threonine 14 coordinates substrate. Residues 14-15 and histidine 22 each bind ATP; that span reads TF. Substrate contacts are provided by lysine 46, leucine 78, and arginine 92. ATP is bound by residues 93-95, glutamate 103, and 128-134; these read GLR and YSFISSS.

The protein belongs to the bacterial CoaD family. As to quaternary structure, homohexamer. Requires Mg(2+) as cofactor.

It localises to the cytoplasm. It catalyses the reaction (R)-4'-phosphopantetheine + ATP + H(+) = 3'-dephospho-CoA + diphosphate. Its pathway is cofactor biosynthesis; coenzyme A biosynthesis; CoA from (R)-pantothenate: step 4/5. Its function is as follows. Reversibly transfers an adenylyl group from ATP to 4'-phosphopantetheine, yielding dephospho-CoA (dPCoA) and pyrophosphate. The chain is Phosphopantetheine adenylyltransferase from Xanthomonas axonopodis pv. citri (strain 306).